Here is a 65-residue protein sequence, read N- to C-terminus: Cytochrome b-c1 complex subunit 9, mitochondrial (65 aa).

The helical transmembrane segment at 14-34 (IYVATIFGGAFAFQGFFDVAV) threads the bilayer.

This sequence belongs to the UQCR10/QCR9 family. In terms of assembly, component of the ubiquinol-cytochrome c oxidoreductase (cytochrome b-c1 complex, complex III, CIII), a multisubunit enzyme composed of 10 subunits. The complex is composed of 3 respiratory subunits cytochrome b (COB), cytochrome c1 (CYT1) and Rieske protein (RIP1), 2 core protein subunits COR1 and QCR2, and 5 low-molecular weight protein subunits QCR6, QCR7, QCR8, QCR9 and QCR10. The complex exists as an obligatory dimer and forms supercomplexes (SCs) in the inner mitochondrial membrane with a monomer or a dimer of cytochrome c oxidase (complex IV, CIV), resulting in 2 different assemblies (supercomplexes III(2)IV and III(2)IV(2)).

It localises to the membrane. It is found in the mitochondrion inner membrane. Functionally, component of the ubiquinol-cytochrome c oxidoreductase, a multisubunit transmembrane complex that is part of the mitochondrial electron transport chain which drives oxidative phosphorylation. The complex plays an important role in the uptake of multiple carbon sources present in different host niches. This Candida albicans (strain SC5314 / ATCC MYA-2876) (Yeast) protein is Cytochrome b-c1 complex subunit 9, mitochondrial.